The sequence spans 339 residues: Serpentine receptor class alpha-21 (339 aa).

Transmembrane regions (helical) follow at residues 30 to 50, 150 to 170, 199 to 219, 250 to 270, and 282 to 302; these read FNFL…WLAI, FIAV…FYIA, VRTV…YLSV, ILIV…NLLL, and VLVA…PLVI.

Belongs to the nematode receptor-like protein sra family.

It is found in the membrane. The polypeptide is Serpentine receptor class alpha-21 (sra-21) (Caenorhabditis elegans).